The chain runs to 223 residues: uncharacterized protein (223 aa).

The transit peptide at 1-12 directs the protein to the mitochondrion; it reads MFRSLVRKTTPL.

The protein localises to the mitochondrion. This is an uncharacterized protein from Candida albicans (strain WO-1) (Yeast).